The following is a 450-amino-acid chain: MNLETGSRGSEFGMSAVSCGNGKLRQWLIDQIDSGKYPGLVWENEEKSVFRIPWKHAGKQDYNREEDAALFKAWALFKGKFREGIDKPDPPTWKTRLRCALNKSNDFEELVERSQLDISDPYKVYRIVPEGAKKGAKQLTLDDTQMAMGHPYPMTAPYGSLPAQQVHNYMMPPHDRSWRDYAPDQSHPEIPYQCPVTFGPRGHHWQGPSCENGCQVTGTFYACAPPESQAPGIPIEPSIRSAEALALSDCRLHICLYYRDILVKELTTTSPEGCRISHGHTYDVSNLDQVLFPYPDDNGQRKNIEKLLSHLERGLVLWMAPDGLYAKRLCQSRIYWDGPLALCSDRPNKLERDQTCKLFDTQQFLSELQVFAHHGRPAPRFQVTLCFGEEFPDPQRQRKLITAHVEPLLARQLYYFAQQNTGHFLRGYELPEHVTTPDYHRSLRHSSIQE.

A DNA-binding region (IRF tryptophan pentad repeat) is located at residues 21–129 (NGKLRQWLID…DPYKVYRIVP (109 aa)). Phosphoserine; by ROCK2 occurs at positions 446 and 447.

This sequence belongs to the IRF family. As to quaternary structure, interacts with SPIB and DEF6. Interacts with the BATF-JUNB heterodimer. Interacts with BATF (via bZIP domain); the interaction is direct. Directly interacts with NLRP3 in the nucleus of Th2 cells; this interaction enhances IRF4 ability to bind to the IL4 promoter and is required for optimal IRF4-dependent IL4 transcription. Interacts with SPI1. Post-translationally, phosphorylation by ROCK2 regulates IL-17 and IL-21 production. In terms of tissue distribution, lymphoid cells.

It localises to the nucleus. It is found in the cytoplasm. Functionally, transcriptional activator. Binds to the interferon-stimulated response element (ISRE) of the MHC class I promoter. Binds the immunoglobulin lambda light chain enhancer, together with PU.1. Probably plays a role in ISRE-targeted signal transduction mechanisms specific to lymphoid cells. Involved in CD8(+) dendritic cell differentiation by forming a complex with the BATF-JUNB heterodimer in immune cells, leading to recognition of AICE sequence (5'-TGAnTCA/GAAA-3'), an immune-specific regulatory element, followed by cooperative binding of BATF and IRF4 and activation of genes. The sequence is that of Interferon regulatory factor 4 from Mus musculus (Mouse).